The following is a 336-amino-acid chain: NADH-quinone oxidoreductase subunit H (336 aa).

A run of 8 helical transmembrane segments spans residues 12-32 (FLKI…LTWF), 84-104 (VVMA…GPGF), 118-138 (VNIA…GTIF), 156-176 (AAVV…VILL), 193-213 (GVWF…CMLA), 247-267 (LAEW…LFFG), 274-294 (IFGP…LVFF), and 313-333 (IAWK…AVVV).

This sequence belongs to the complex I subunit 1 family. As to quaternary structure, NDH-1 is composed of 14 different subunits. Subunits NuoA, H, J, K, L, M, N constitute the membrane sector of the complex.

Its subcellular location is the cell inner membrane. It catalyses the reaction a quinone + NADH + 5 H(+)(in) = a quinol + NAD(+) + 4 H(+)(out). Functionally, NDH-1 shuttles electrons from NADH, via FMN and iron-sulfur (Fe-S) centers, to quinones in the respiratory chain. The immediate electron acceptor for the enzyme in this species is believed to be ubiquinone. Couples the redox reaction to proton translocation (for every two electrons transferred, four hydrogen ions are translocated across the cytoplasmic membrane), and thus conserves the redox energy in a proton gradient. This subunit may bind ubiquinone. The protein is NADH-quinone oxidoreductase subunit H of Aquifex aeolicus (strain VF5).